The sequence spans 333 residues: 4-hydroxyproline epimerase (333 aa).

The active-site Proton acceptor is C90. Substrate is bound by residues 91 to 92 (GH) and D249. The Proton donor role is filled by C253. 254 to 255 (GT) serves as a coordination point for substrate.

It belongs to the proline racemase family. Homodimer.

It carries out the reaction trans-4-hydroxy-L-proline = cis-4-hydroxy-D-proline. With respect to regulation, inhibited by iodoacetate, iodoacetamide and by high amounts (10 mM) of pyrrole-2-carboxylic acid (PYC). Not inhibited by PYC at 1 mM. In terms of biological role, allows intracellular utilization of 4-hydroxyproline, one of the major constituents of host collagen, by converting 4-hydroxy-L-proline to 4-hydroxy-D-proline, which can be further metabolized by intracellular 4-hydroxy-D-proline oxidases. Strong B-cell mitogen. Plays an important role in the regulation of intra- and extracellular amino acid pools, allowing the bacterium to profit from host precursors and enzymatic pathways. The protein is 4-hydroxyproline epimerase of Brucella melitensis biotype 1 (strain ATCC 23456 / CCUG 17765 / NCTC 10094 / 16M).